The primary structure comprises 249 residues: Isoprenyl transferase (249 aa).

Residue Asp25 is part of the active site. Asp25 provides a ligand contact to Mg(2+). Substrate contacts are provided by residues 26–29, Trp30, Arg38, His42, and 70–72; these read GNGR and STE. Asn73 functions as the Proton acceptor in the catalytic mechanism. Residues Trp74, Arg76, Arg197, and 203–205 contribute to the substrate site; that span reads RLS. Glu216 is a binding site for Mg(2+).

Belongs to the UPP synthase family. As to quaternary structure, homodimer. Mg(2+) is required as a cofactor.

Its function is as follows. Catalyzes the condensation of isopentenyl diphosphate (IPP) with allylic pyrophosphates generating different type of terpenoids. This chain is Isoprenyl transferase, found in Streptococcus pyogenes serotype M1.